Here is a 505-residue protein sequence, read N- to C-terminus: Mannosylglucosyl-3-phosphoglycerate synthase (505 aa).

In terms of assembly, monomer in solution.

It carries out the reaction (2R)-2-O-(alpha-D-glucopyranosyl)-3-phospho-glycerate + GDP-alpha-D-mannose = (2R)-2-O-[alpha-D-mannopyranosyl-(1-&gt;2)-alpha-D-glucopyranosyl]-3-phospho-glycerate + GDP + H(+). Its activity is regulated as follows. Not strictly dependent on divalent cations, but the presence of Mn(2+), Ca(2+), Mg(2+) or Co(2+) stimulates activity. Functionally, involved in the biosynthesis of the compatible solute mannosylglucosylglycerate through a phosphorylating pathway. Catalyzes the conversion of glucosyl-3-phosphoglycerate (GPG) to mannosylglucosyl-3-phosphoglycerate (MGPG). This is Mannosylglucosyl-3-phosphoglycerate synthase from Petrotoga mobilis (strain DSM 10674 / SJ95).